We begin with the raw amino-acid sequence, 180 residues long: Adenine phosphoribosyltransferase (180 aa).

S2 bears the N-acetylserine mark. 2 positions are modified to phosphoserine: S15 and S30. At Y60 the chain carries Phosphotyrosine. Residue S66 is modified to Phosphoserine. Residue K114 is modified to N6-acetyllysine. Residue T135 is modified to Phosphothreonine.

The protein belongs to the purine/pyrimidine phosphoribosyltransferase family. In terms of assembly, homodimer.

Its subcellular location is the cytoplasm. The enzyme catalyses AMP + diphosphate = 5-phospho-alpha-D-ribose 1-diphosphate + adenine. The protein operates within purine metabolism; AMP biosynthesis via salvage pathway; AMP from adenine: step 1/1. Functionally, catalyzes a salvage reaction resulting in the formation of AMP, that is energically less costly than de novo synthesis. The sequence is that of Adenine phosphoribosyltransferase from Mus musculus (Mouse).